A 146-amino-acid chain; its full sequence is Leptin (146 aa).

Cys-96 and Cys-146 are joined by a disulfide.

The protein belongs to the leptin family.

It is found in the secreted. Functionally, key player in the regulation of energy balance and body weight control. Once released into the circulation, has central and peripheral effects by binding LEPR, found in many tissues, which results in the activation of several major signaling pathways. In the hypothalamus, acts as an appetite-regulating factor that induces a decrease in food intake and an increase in energy consumption by inducing anorexinogenic factors and suppressing orexigenic neuropeptides, also regulates bone mass and secretion of hypothalamo-pituitary-adrenal hormones. In the periphery, increases basal metabolism, influences reproductive function, regulates pancreatic beta-cell function and insulin secretion, is pro-angiogenic for endothelial cell and affects innate and adaptive immunity. In the arcuate nucleus of the hypothalamus, activates by depolarization POMC neurons inducing FOS and SOCS3 expression to release anorexigenic peptides and inhibits by hyperpolarization NPY neurons inducing SOCS3 with a consequent reduction on release of orexigenic peptides. In addition to its known satiety inducing effect, has a modulatory role in nutrient absorption. In the intestine, reduces glucose absorption by enterocytes by activating PKC and leading to a sequential activation of p38, PI3K and ERK signaling pathways which exerts an inhibitory effect on glucose absorption. Acts as a growth factor on certain tissues, through the activation of different signaling pathways increases expression of genes involved in cell cycle regulation such as CCND1, via JAK2-STAT3 pathway, or VEGFA, via MAPK1/3 and PI3K-AKT1 pathways. May also play an apoptotic role via JAK2-STAT3 pathway and up-regulation of BIRC5 expression. Pro-angiogenic, has mitogenic activity on vascular endothelial cells and plays a role in matrix remodeling by regulating the expression of matrix metalloproteinases (MMPs) and tissue inhibitors of metalloproteinases (TIMPs). In innate immunity, modulates the activity and function of neutrophils by increasing chemotaxis and the secretion of oxygen radicals. Increases phagocytosis by macrophages and enhances secretion of pro-inflammatory mediators. Increases cytotoxic ability of NK cells. Plays a pro-inflammatory role, in synergy with IL1B, by inducing NOS2 which promotes the production of IL6, IL8 and Prostaglandin E2, through a signaling pathway that involves JAK2, PI3K, MAP2K1/MEK1 and MAPK14/p38. In adaptive immunity, promotes the switch of memory T-cells towards T helper-1 cell immune responses. Increases CD4(+)CD25(-) T-cell proliferation and reduces autophagy during TCR (T-cell receptor) stimulation, through MTOR signaling pathway activation and BCL2 up-regulation. This Pan troglodytes (Chimpanzee) protein is Leptin (LEP).